Consider the following 279-residue polypeptide: Tryptophan synthase alpha chain (279 aa).

Residues Glu-50 and Asp-61 each act as proton acceptor in the active site.

It belongs to the TrpA family. Tetramer of two alpha and two beta chains.

The enzyme catalyses (1S,2R)-1-C-(indol-3-yl)glycerol 3-phosphate + L-serine = D-glyceraldehyde 3-phosphate + L-tryptophan + H2O. The protein operates within amino-acid biosynthesis; L-tryptophan biosynthesis; L-tryptophan from chorismate: step 5/5. Functionally, the alpha subunit is responsible for the aldol cleavage of indoleglycerol phosphate to indole and glyceraldehyde 3-phosphate. The protein is Tryptophan synthase alpha chain of Rhizobium johnstonii (strain DSM 114642 / LMG 32736 / 3841) (Rhizobium leguminosarum bv. viciae).